Consider the following 61-residue polypeptide: Protein SspF (61 aa).

It belongs to the alpha/beta-type SASP family.

May play some important role in either sporulation or the dormant spore. The polypeptide is Protein SspF (sspF) (Bacillus subtilis (strain 168)).